The sequence spans 311 residues: MNPDLLDHTVAEIAAEMAQRPDRGAVASYIPELAGVDPQRFGLVVIDADGHVAAGGDADMPFSIQSISKVFTLTLALGLAGDRVWRRVGREPSGSAFNSIVQLERERGIPRNPFINAGAIAVTDLILSGHQPREALGEILRFMQFLAGDDSIVIDDAVAASEQRTGFRNAALANYMKSFGVLDNPVEYTLGVYFHHCAIAMSCRQLALAGRFLAHNGRNPSTGHNVVSTQRARRINALMLTCGHYDGSGEFAYRVGLPGKSGVGGGVLAVAPGKASIAVWSPGLDAAGNSHLGRIALEALTRRLGWSIFGV.

Residues Ser66, Asn116, Glu162, Asn169, Tyr193, Tyr245, and Val263 each coordinate substrate.

The protein belongs to the glutaminase family. In terms of assembly, homotetramer.

The catalysed reaction is L-glutamine + H2O = L-glutamate + NH4(+). This Rhodopseudomonas palustris (strain HaA2) protein is Glutaminase.